An 81-amino-acid chain; its full sequence is Small ribosomal subunit protein bS16 (81 aa).

This sequence belongs to the bacterial ribosomal protein bS16 family.

This is Small ribosomal subunit protein bS16 from Alkaliphilus oremlandii (strain OhILAs) (Clostridium oremlandii (strain OhILAs)).